The primary structure comprises 291 residues: 5-hydroxytryptamine receptor 1D (291 aa).

A helical membrane pass occupies residues 30–54 (LCDIWLSSDITCCTASILHLCVIAL). The cysteines at positions 31 and 108 are disulfide-linked. 2 residues coordinate serotonin: aspartate 38 and cysteine 42. The DRY motif; important for ligand-induced conformation changes motif lies at 55–57 (DRY). A helical transmembrane segment spans residues 75–96 (AAAMIAIVWAISICISIPPLFW). An N-linked (GlcNAc...) asparagine glycan is attached at asparagine 111. The next 3 membrane-spanning stretches (helical) occupy residues 115 to 138 (ISYT…ILYG), 221 to 246 (KTLG…VLPI), and 256 to 279 (ALFD…YTVF). Serotonin is bound at residue serine 241. Residues 272 to 276 (NPIIY) carry the NPxxY motif; important for ligand-induced conformation changes and signaling motif.

Belongs to the G-protein coupled receptor 1 family. Homodimer. Heterodimer with HTR1B.

Its subcellular location is the cell membrane. G-protein coupled receptor for 5-hydroxytryptamine (serotonin). Also functions as a receptor for ergot alkaloid derivatives, various anxiolytic and antidepressant drugs and other psychoactive substances. Ligand binding causes a conformation change that triggers signaling via guanine nucleotide-binding proteins (G proteins) and modulates the activity of downstream effectors, such as adenylate cyclase. HTR1D is coupled to G(i)/G(o) G alpha proteins and mediates inhibitory neurotransmission by inhibiting adenylate cyclase activity. Regulates the release of 5-hydroxytryptamine in the brain, and thereby affects neural activity. May also play a role in regulating the release of other neurotransmitters. May play a role in vasoconstriction. In Sus scrofa (Pig), this protein is 5-hydroxytryptamine receptor 1D (HTR1D).